Here is a 254-residue protein sequence, read N- to C-terminus: Vesicle transport protein USE1 (254 aa).

The Cytoplasmic portion of the chain corresponds to 1 to 228 (MAYISENELK…AYKCGYDCFK (228 aa)). The chain crosses the membrane as a helical; Anchor for type IV membrane protein span at residues 229 to 249 (VMLIVLIFMSFVSMVLMMKIF). Residues 250-254 (KKAST) are Lumenal-facing.

It belongs to the USE1 family.

The protein localises to the endoplasmic reticulum membrane. In terms of biological role, SNARE that may be involved in targeting and fusion of Golgi-derived retrograde transport vesicles with the ER. The sequence is that of Vesicle transport protein USE1 from Caenorhabditis elegans.